A 318-amino-acid chain; its full sequence is AT-hook motif nuclear-localized protein 7 (318 aa).

Disordered regions lie at residues 1 to 76 (METS…PSSS) and 241 to 318 (SDQQ…LPVD). Residues 56–64 (KKRRGRPRK) carry the Bipartite nuclear localization signal motif. A DNA-binding region (a.T hook) is located at residues 56-68 (KKRRGRPRKYEAN). One can recognise a PPC domain in the interval 120–259 (GSNFTPHVIT…RKQRVEHAPA (140 aa)). Residues 243 to 256 (QQDHQKPRKQRVEH) show a composition bias toward basic and acidic residues. Residues 264-274 (VPPPPSPPPPA) are compositionally biased toward pro residues. A compositionally biased stretch (polar residues) spans 288 to 312 (PPSSFGISSWTNGQDMPRNSATDIN).

The protein localises to the nucleus. In terms of biological role, transcription factor that specifically binds AT-rich DNA sequences related to the nuclear matrix attachment regions (MARs). The sequence is that of AT-hook motif nuclear-localized protein 7 from Arabidopsis thaliana (Mouse-ear cress).